The chain runs to 423 residues: AP-1 complex subunit mu-1 (423 aa).

The residue at position 2 (Ser-2) is an N-acetylserine. Phosphothreonine is present on residues Thr-152, Thr-154, and Thr-223. Residues 168-421 (KNEVFLDVIE…ITQNGDYQLR (254 aa)) form the MHD domain.

The protein belongs to the adaptor complexes medium subunit family. In terms of assembly, adaptor protein complex 1 (AP-1) is a heterotetramer composed of two large adaptins (gamma-type subunit AP1G1 and beta-type subunit AP1B1), a medium adaptin (mu-type subunit AP1M1 or AP1M2) and a small adaptin (sigma-type subunit AP1S1 or AP1S2 or AP1S3). Interacts with MARCHF11. Phosphorylation of membrane-bound AP1M1/AP1M2 increases its affinity for sorting signals.

It localises to the golgi apparatus. Its subcellular location is the cytoplasmic vesicle. It is found in the clathrin-coated vesicle membrane. Its function is as follows. Subunit of clathrin-associated adaptor protein complex 1 that plays a role in protein sorting in the trans-Golgi network (TGN) and endosomes. The AP complexes mediate the recruitment of clathrin to membranes and the recognition of sorting signals within the cytosolic tails of transmembrane cargo molecules. The chain is AP-1 complex subunit mu-1 (Ap1m1) from Mus musculus (Mouse).